The chain runs to 359 residues: Photosystem II protein D1 1 (359 aa).

3 helical membrane-spanning segments follow: residues 29-46 (YVGW…AATI), 118-133 (HFLI…EWEL), and 142-156 (WICV…AASA). His-118 contributes to the chlorophyll a binding site. A pheophytin a-binding site is contributed by Tyr-126. Residues Asp-170 and Glu-189 each contribute to the [CaMn4O5] cluster site. Residues 197–218 (FHMLGVAGVFGGSLFSAMHGSL) traverse the membrane as a helical segment. His-198 contributes to the chlorophyll a binding site. Residues His-215 and 264–265 (SF) contribute to the a quinone site. His-215 is a binding site for Fe cation. Residue His-272 coordinates Fe cation. The helical transmembrane segment at 274-288 (FLAAWPVVGIWFTAL) threads the bilayer. 4 residues coordinate [CaMn4O5] cluster: His-332, Glu-333, Asp-342, and Ala-344. A propeptide spanning residues 345–359 (AAESTPVALQAPAIG) is cleaved from the precursor.

Belongs to the reaction center PufL/M/PsbA/D family. As to quaternary structure, PSII is composed of 1 copy each of membrane proteins PsbA, PsbB, PsbC, PsbD, PsbE, PsbF, PsbH, PsbI, PsbJ, PsbK, PsbL, PsbM, PsbT, PsbX, PsbY, PsbZ, Psb30/Ycf12, peripheral proteins PsbO, CyanoQ (PsbQ), PsbU, PsbV and a large number of cofactors. It forms dimeric complexes. Requires The D1/D2 heterodimer binds P680, chlorophylls that are the primary electron donor of PSII, and subsequent electron acceptors. It shares a non-heme iron and each subunit binds pheophytin, quinone, additional chlorophylls, carotenoids and lipids. D1 provides most of the ligands for the Mn4-Ca-O5 cluster of the oxygen-evolving complex (OEC). There is also a Cl(-1) ion associated with D1 and D2, which is required for oxygen evolution. The PSII complex binds additional chlorophylls, carotenoids and specific lipids. as cofactor. Post-translationally, tyr-161 forms a radical intermediate that is referred to as redox-active TyrZ, YZ or Y-Z. C-terminally processed by CtpA; processing is essential to allow assembly of the oxygen-evolving complex and thus photosynthetic growth.

Its subcellular location is the cellular thylakoid membrane. It carries out the reaction 2 a plastoquinone + 4 hnu + 2 H2O = 2 a plastoquinol + O2. Functionally, photosystem II (PSII) is a light-driven water:plastoquinone oxidoreductase that uses light energy to abstract electrons from H(2)O, generating O(2) and a proton gradient subsequently used for ATP formation. It consists of a core antenna complex that captures photons, and an electron transfer chain that converts photonic excitation into a charge separation. The D1/D2 (PsbA/PsbD) reaction center heterodimer binds P680, the primary electron donor of PSII as well as several subsequent electron acceptors. In Parasynechococcus marenigrum (strain WH8102), this protein is Photosystem II protein D1 1.